The chain runs to 35 residues: Conotoxin Cal6.1f (35 aa).

Residues 1-8 (GLIRPSKR) constitute a propeptide that is removed on maturation. 3 disulfides stabilise this stretch: C9–C25, C16–C29, and C24–C34.

The protein belongs to the conotoxin O1 superfamily. As to expression, expressed by the venom duct.

The protein localises to the secreted. Its function is as follows. Probable neurotoxin with unknown target. Possibly targets ion channels. The polypeptide is Conotoxin Cal6.1f (Californiconus californicus (California cone)).